The following is a 304-amino-acid chain: L-lactate dehydrogenase (304 aa).

NAD(+)-binding positions include Val11, Asp32, Arg37, and 76–77 (GA). Substrate-binding positions include Gln79, Arg85, and 117-120 (NPVD). NAD(+) is bound at residue Ser138. Position 143–146 (143–146 (DSAR)) interacts with substrate. 2 residues coordinate beta-D-fructose 1,6-bisphosphate: Arg148 and His163. The active-site Proton acceptor is His170. Residue Thr225 coordinates substrate.

It belongs to the LDH/MDH superfamily. LDH family. As to quaternary structure, homotetramer.

The protein localises to the cytoplasm. The enzyme catalyses (S)-lactate + NAD(+) = pyruvate + NADH + H(+). Its pathway is fermentation; pyruvate fermentation to lactate; (S)-lactate from pyruvate: step 1/1. With respect to regulation, allosterically activated by fructose 1,6-bisphosphate (FBP). Its function is as follows. Catalyzes the conversion of lactate to pyruvate. This is L-lactate dehydrogenase from Deinococcus radiodurans (strain ATCC 13939 / DSM 20539 / JCM 16871 / CCUG 27074 / LMG 4051 / NBRC 15346 / NCIMB 9279 / VKM B-1422 / R1).